A 2883-amino-acid chain; its full sequence is Desmoplakin (2883 aa).

The tract at residues 1-21 (MSCNGGSHPRINTLGRMTRAE) is disordered. Residues 1 to 596 (MSCNGGSHPR…DYMKTIEDLE (596 aa)) are interaction with PKP1, JUP, PKP2. The tract at residues 1–1068 (MSCNGGSHPR…ANSENCNKNK (1068 aa)) is globular 1. Residue Ser22 is modified to Phosphoserine. A Phosphothreonine modification is found at Thr59. Position 65 is a phosphoserine (Ser65). Tyr68 bears the Phosphotyrosine mark. Thr73 carries the phosphothreonine modification. A phosphoserine mark is found at Ser177, Ser178, and Ser188. Spectrin repeat units follow at residues 190 to 283 (SGWD…HLRQ) and 284 to 387 (LQNI…LKEN). Residues 388-458 (AAYFQFFEEA…NLVNKSKKIV (71 aa)) form a Spectrin 3a repeat. Positions 470 to 527 (NKPIILRALCDYKQDQKIVHKGDECILKDNNERSKWYVTGPGGVDMLVPSVGLIIPPP) constitute an SH3 domain. Residues 528 to 557 (NPLAVDLSCKIEQYYEAILALWNQLYINMK) form a Spectrin 3b repeat. 3 Spectrin repeats span residues 558 to 639 (SLVS…IQLP), 666 to 781 (VIET…SLCS), and 782 to 895 (VRAL…DLEK). Residues 1034 to 1956 (KSLEDLKLKN…LQKEIEKLRQ (923 aa)) adopt a coiled-coil conformation. Residues 1069-1957 (FLDQNLQKYQ…QKEIEKLRQR (889 aa)) are central fibrous rod domain. Ser1670, Ser1720, and Ser2036 each carry phosphoserine. The segment at 1958 to 2882 (PYGSHRETQT…YSFSSSSIGG (925 aa)) is globular 2. The segment at 1972–2220 (TVDSSKLVFD…LLLSVQKRSM (249 aa)) is 4.5 X 38 AA tandem repeats (Domain A). 17 Plectin repeats span residues 2021–2057 (QPFL…PEST), 2058–2095 (VMLL…FDDR), 2096–2133 (QQIY…RETG), 2134–2171 (MRLL…RDLY), 2175–2209 (NDPR…PHTG), 2210–2245 (LLLL…PSTV), 2263–2300 (KDFL…PGTA), 2301–2338 (LELL…IEFK), 2339–2376 (EKLL…KGHG), 2377–2414 (IRLL…EELS), 2418–2452 (SDPS…EETG), 2468–2505 (SQKN…YDTF), 2519–2556 (TITG…RKFF), 2622–2659 (SDPL…SITG), 2660–2697 (QRLL…QDMA), 2736–2773 (QRFL…GRAA), and 2774–2811 (QRLQ…DITG). A phosphoserine mark is found at Ser2219, Ser2221, and Ser2237. Residues 2256-2458 (DEVGERIKDF…EETGLCLLPL (203 aa)) form a 4.5 X 38 AA tandem repeats (Domain B) region. Gln2492 is lipidated: Omega-hydroxyceramide glutamate ester. Residues 2621–2833 (LSDPLEESSP…GLPSPYNMSA (213 aa)) form a 4.5 X 38 AA tandem repeats (Domain C) region. Phosphoserine occurs at positions 2822 and 2827. The tract at residues 2822–2883 (SKGLPSPYNM…SFSSSSIGGY (62 aa)) is disordered. Tyr2829 is modified (phosphotyrosine). A phosphoserine mark is found at Ser2832 and Ser2836. The interval 2835–2858 (GSRSGSRSGSRSGSRSGSRSGSRR) is 6 X 4 AA tandem repeats of G-S-R-[SR]. Over residues 2835–2858 (GSRSGSRSGSRSGSRSGSRSGSRR) the composition is skewed to low complexity. Arg2837 and Arg2858 each carry omega-N-methylarginine. Position 2860 is a phosphoserine (Ser2860). Thr2864 is subject to Phosphothreonine. Positions 2867 to 2883 (SSYSYSYSFSSSSIGGY) are enriched in low complexity. Ser2879 carries the post-translational modification Phosphoserine.

Belongs to the plakin or cytolinker family. As to quaternary structure, homodimer. Interacts with COL17A1 (via cytoplasmic region). Interacts with DSC2. Interacts with PKP1. Interacts with PKP2. Interacts weakly with TMEM65. Phosphorylation at Ser-2860 increases association with intermediate filament cytokeratin, potentially facilitating interaction between desmosome junctions and intermediate filament architecture. As to expression, expressed in undifferentiated keratinocytes of the epidermis at birth, expression increases as differentiation proceeds (at protein level). Abundantly expressed in the suprabasal layers and weakly in the basal layers of the outer hair root sheath (at protein level). Expressed at intercalated disks in cardiomyocytes (at protein level).

Its subcellular location is the cell junction. The protein localises to the desmosome. It is found in the cell membrane. It localises to the cytoplasm. Major high molecular weight protein of desmosomes. Regulates profibrotic gene expression in cardiomyocytes via activation of the MAPK14/p38 MAPK signaling cascade and increase in TGFB1 protein abundance. This is Desmoplakin from Mus musculus (Mouse).